The following is a 1368-amino-acid chain: DNA-directed RNA polymerase subunit beta (1368 aa).

It belongs to the RNA polymerase beta chain family. As to quaternary structure, the RNAP catalytic core consists of 2 alpha, 1 beta, 1 beta' and 1 omega subunit. When a sigma factor is associated with the core the holoenzyme is formed, which can initiate transcription.

The enzyme catalyses RNA(n) + a ribonucleoside 5'-triphosphate = RNA(n+1) + diphosphate. In terms of biological role, DNA-dependent RNA polymerase catalyzes the transcription of DNA into RNA using the four ribonucleoside triphosphates as substrates. The protein is DNA-directed RNA polymerase subunit beta of Legionella pneumophila (strain Paris).